Consider the following 597-residue polypeptide: Inactive metallocarboxypeptidase ECM14 (597 aa).

An N-terminal signal peptide occupies residues 1–21 (MRLFTHGQVLALLAFVNTISA). A propeptide spanning residues 22 to 174 (TPSFSTNSYP…QTIYESYPSP (153 aa)) is cleaved from the precursor. Residues 170–179 (SYPSPSQSPS) show a composition bias toward low complexity. Residues 170–189 (SYPSPSQSPSGRERGFLPSG) are disordered. One can recognise a Peptidase M14 domain in the interval 202-522 (NYQPLSVIVP…NAVMMLGRFL (321 aa)). Histidine 264 and glutamate 267 together coordinate Zn(2+). Substrate is bound by residues 264–267 (HARE), arginine 322, and 339–340 (DR). Cysteine 333 and cysteine 356 are disulfide-bonded. A glycan (N-linked (GlcNAc...) asparagine) is linked at asparagine 349. Position 396 (histidine 396) interacts with Zn(2+). Position 397-398 (397-398 (SY)) interacts with substrate. The tract at residues 543–597 (KDDKPILNDDDDDDADTNDDGIGRKDDSWIPDEYKGDNDRDESDGGWAFRRLRKR) is disordered. Over residues 550–561 (NDDDDDDADTND) the composition is skewed to acidic residues. Residues 563-580 (GIGRKDDSWIPDEYKGDN) show a composition bias toward basic and acidic residues.

Belongs to the peptidase M14 family. The cofactor is Zn(2+).

The protein resides in the vacuole. It localises to the secreted. Functionally, inactive carboxypeptidase that may play a role in cell wall organization and biogenesis. In Ajellomyces capsulatus (strain G186AR / H82 / ATCC MYA-2454 / RMSCC 2432) (Darling's disease fungus), this protein is Inactive metallocarboxypeptidase ECM14 (ECM14).